Reading from the N-terminus, the 562-residue chain is NAD-dependent malic enzyme (562 aa).

Tyr-101 functions as the Proton donor in the catalytic mechanism. Arg-154 is a binding site for NAD(+). Lys-172 serves as the catalytic Proton acceptor. 3 residues coordinate a divalent metal cation: Glu-243, Asp-244, and Asp-267. Asp-267 and Asn-415 together coordinate NAD(+).

The protein belongs to the malic enzymes family. As to quaternary structure, homotetramer. Mg(2+) serves as cofactor. Requires Mn(2+) as cofactor.

It catalyses the reaction (S)-malate + NAD(+) = pyruvate + CO2 + NADH. The enzyme catalyses oxaloacetate + H(+) = pyruvate + CO2. This is NAD-dependent malic enzyme from Shewanella oneidensis (strain ATCC 700550 / JCM 31522 / CIP 106686 / LMG 19005 / NCIMB 14063 / MR-1).